The following is an 896-amino-acid chain: Echinoderm microtubule-associated protein-like 3 (896 aa).

An N-acetylmethionine modification is found at methionine 1. Residues 16–43 (LQSLSQRLRVQEQEMELVKAALAEALRL) adopt a coiled-coil conformation. The interval 50 to 209 (PSSLQGSGTP…GGPGSRRSNY (160 aa)) is disordered. A compositionally biased stretch (polar residues) spans 77-88 (TPSLVSRGTQTE). A compositionally biased stretch (pro residues) spans 134-145 (PGPPGILRPLQP). Residues 154–163 (RNSSSSSSPS) are compositionally biased toward low complexity. Over residues 174–189 (AISSANLLVRSGSTES) the composition is skewed to polar residues. Phosphoserine is present on residues serine 176, serine 198, and serine 204. WD repeat units follow at residues 234 to 286 (RSLE…LYRP), 295 to 344 (GGGQ…IWDS), 350 to 392 (LQEI…VWDC), 398 to 434 (LAEI…FWNW), 448 to 487 (RKQG…TWGR), 504 to 543 (YGIV…QWGP), 549 to 584 (QEAE…LRGD), 589 to 626 (FSPV…LWDG), 629 to 667 (HALA…VLDT), 674 to 709 (SDVI…IYSV), 716 to 755 (SSRF…YWDV), 765 to 823 (RYES…LFQY), and 830 to 869 (APSR…QWRV). The interval 876 to 896 (GPAPATPSRTPSLSPASSLDV) is disordered. Low complexity predominate over residues 877 to 896 (PAPATPSRTPSLSPASSLDV). Threonine 881 is subject to Phosphothreonine; by CDK1. A Phosphoserine modification is found at serine 883.

This sequence belongs to the WD repeat EMAP family. As to quaternary structure, homotrimer; self-association is mediated by the N-terminal coiled coil. Interacts with EML2 but not with EML1. Interacts (phosphorylated at Thr-881) with TUBG1, HAUS1, HAUS2, HAUS3, HAUS4, HAUS5, HAUS6, HAUS7 and HAUS8. Post-translationally, phosphorylation at Thr-881 during mitosis is required for interaction with TUBG1, HAUS1, HAUS2, HAUS3, HAUS4, HAUS5, HAUS6, HAUS7 and HAUS8 and their recruitment to spindle microtubules.

Its subcellular location is the cytoplasm. It localises to the cytoskeleton. The protein localises to the nucleus. The protein resides in the midbody. It is found in the spindle. Functionally, regulates mitotic spindle assembly, microtubule (MT)-kinetochore attachment and chromosome separation via recruitment of HAUS augmin-like complex and TUBG1 to the existing MTs and promoting MT-based MT nucleation. Required for proper alignnment of chromosomes during metaphase. The chain is Echinoderm microtubule-associated protein-like 3 (EML3) from Homo sapiens (Human).